A 617-amino-acid polypeptide reads, in one-letter code: MSAFFAPTLRSAPADATIASHQLLMRAGYVRKIANGLFAYLPLGLRVRHKIEAIIREELEAIGCLECTAPVVTPAELWKESGRWYRMGAELLRAKNRLDHELLFSPTAEESFTALVRGDCTSYKHFPLSLYQINAKYRDEIRPRYGLMRAREFTMADAYSFHTDCACLARTYEKFAHAYRAIFRRIGLSVIAVHAHLGAMGGQESEEFMVESAVGDNTLLLCPHCTYAANCEKAVGQRPLPDTHDTHLKDEHEGSDLKTPAAMREVHTPHVKTIEELEHFLHVPAHRCIKTLIYRIDTVPQAAGHFVAVCIRGDLELNESKLEALLRVPSVVLATEQEVYALSGTPVGFIGPVGLAQRAAAAYAARTPAFFPSAAEPASVTSDIPFFSLVADQSVMAMHNAITGALKVDTHLVQVEPGRDFVPDAVADLMLVRAGDRCIHCGAPLYEKKGNELGHLFKLGDKYTRSMHLTFTDEQGVRQFPLMGCYGIGLDRTLASVVENHHDTRGISWPLAISPYAVVLIPIPHTQAPYAAAEALYVQLRTRGVEVLFDDRAERPGVKFADADLIGIPLRVVLSAKTLPRVECTTRCGAHTYFFTQEEASEHIARLLEQLASPESS.

This sequence belongs to the class-II aminoacyl-tRNA synthetase family. ProS type 1 subfamily. As to quaternary structure, homodimer.

It is found in the cytoplasm. The enzyme catalyses tRNA(Pro) + L-proline + ATP = L-prolyl-tRNA(Pro) + AMP + diphosphate. Its function is as follows. Catalyzes the attachment of proline to tRNA(Pro) in a two-step reaction: proline is first activated by ATP to form Pro-AMP and then transferred to the acceptor end of tRNA(Pro). As ProRS can inadvertently accommodate and process non-cognate amino acids such as alanine and cysteine, to avoid such errors it has two additional distinct editing activities against alanine. One activity is designated as 'pretransfer' editing and involves the tRNA(Pro)-independent hydrolysis of activated Ala-AMP. The other activity is designated 'posttransfer' editing and involves deacylation of mischarged Ala-tRNA(Pro). The misacylated Cys-tRNA(Pro) is not edited by ProRS. The sequence is that of Proline--tRNA ligase from Treponema pallidum (strain Nichols).